The sequence spans 178 residues: Ribosome maturation factor RimP (178 aa).

The protein belongs to the RimP family.

It is found in the cytoplasm. Required for maturation of 30S ribosomal subunits. The polypeptide is Ribosome maturation factor RimP (Cutibacterium acnes (strain DSM 16379 / KPA171202) (Propionibacterium acnes)).